We begin with the raw amino-acid sequence, 396 residues long: CCA-adding enzyme (396 aa).

ATP-binding residues include Gly32 and Arg35. CTP is bound by residues Gly32 and Arg35. Mg(2+) contacts are provided by Asp45 and Asp47. The ATP site is built by Arg116, Asp159, Arg162, Arg165, and Arg168. Residues Arg116, Asp159, Arg162, Arg165, and Arg168 each contribute to the CTP site.

It belongs to the tRNA nucleotidyltransferase/poly(A) polymerase family. Bacterial CCA-adding enzyme type 3 subfamily. Homodimer. It depends on Mg(2+) as a cofactor.

It catalyses the reaction a tRNA precursor + 2 CTP + ATP = a tRNA with a 3' CCA end + 3 diphosphate. It carries out the reaction a tRNA with a 3' CCA end + 2 CTP + ATP = a tRNA with a 3' CCACCA end + 3 diphosphate. Catalyzes the addition and repair of the essential 3'-terminal CCA sequence in tRNAs without using a nucleic acid template. Adds these three nucleotides in the order of C, C, and A to the tRNA nucleotide-73, using CTP and ATP as substrates and producing inorganic pyrophosphate. tRNA 3'-terminal CCA addition is required both for tRNA processing and repair. Also involved in tRNA surveillance by mediating tandem CCA addition to generate a CCACCA at the 3' terminus of unstable tRNAs. While stable tRNAs receive only 3'-terminal CCA, unstable tRNAs are marked with CCACCA and rapidly degraded. The polypeptide is CCA-adding enzyme (Lactobacillus delbrueckii subsp. bulgaricus (strain ATCC 11842 / DSM 20081 / BCRC 10696 / JCM 1002 / NBRC 13953 / NCIMB 11778 / NCTC 12712 / WDCM 00102 / Lb 14)).